Reading from the N-terminus, the 401-residue chain is Nodulation protein E (401 aa).

In terms of domain architecture, Ketosynthase family 3 (KS3) spans 2–400; sequence DRRVVITGMG…GTNAVLAFKQ (399 aa). Catalysis depends on for beta-ketoacyl synthase activity residues cysteine 161, histidine 293, and histidine 330. A helical transmembrane segment spans residues 328–347; that stretch reads HAHCIGAASALEMIACVMAI.

Belongs to the thiolase-like superfamily. Beta-ketoacyl-ACP synthases family.

Its subcellular location is the cell inner membrane. Its function is as follows. Proposed to synthesize NOD factor fatty acyl chain. Involved in the synthesis of a highly unsaturated fatty acid moiety, which forms part of a lipo-oligosaccharide that is responsible for host specificity. This Rhizobium meliloti (Ensifer meliloti) protein is Nodulation protein E (nodE).